The chain runs to 529 residues: Probable biotin-dependent acyl-coenzyme A carboxylase beta2 subunit (529 aa).

Residues 20-271 form the CoA carboxyltransferase N-terminal domain; that stretch reads MSGKLDEINA…IKQGPAPAPV (252 aa). In terms of domain architecture, CoA carboxyltransferase C-terminal spans 270 to 520; sequence PVTEPLFDAE…SAIANGPIKG (251 aa).

This sequence belongs to the AccD/PCCB family. The biotin-dependent acyl-CoA carboxylase complex is composed of an AccA protein, which contains the biotin carboxylase (BC) and biotin carboxyl carrier protein (BCCP) domains, and an AccD protein, which contains the carboxyl transferase (CT) domain.

Its function is as follows. Component of a biotin-dependent acyl-CoA carboxylase complex. This subunit transfers the CO2 from carboxybiotin to the CoA ester substrate. The sequence is that of Probable biotin-dependent acyl-coenzyme A carboxylase beta2 subunit (accD2) from Mycobacterium tuberculosis (strain ATCC 25618 / H37Rv).